The following is a 489-amino-acid chain: ATP synthase subunit beta 1 (489 aa).

Position 159-166 (159-166 (GGAGVGKT)) interacts with ATP. Positions 465–477 (EKSKKAAEDKPKA) are enriched in basic and acidic residues. Positions 465–489 (EKSKKAAEDKPKAEEDEDATSLHDA) are disordered.

This sequence belongs to the ATPase alpha/beta chains family. F-type ATPases have 2 components, CF(1) - the catalytic core - and CF(0) - the membrane proton channel. CF(1) has five subunits: alpha(3), beta(3), gamma(1), delta(1), epsilon(1). CF(0) has three main subunits: a(1), b(2) and c(9-12). The alpha and beta chains form an alternating ring which encloses part of the gamma chain. CF(1) is attached to CF(0) by a central stalk formed by the gamma and epsilon chains, while a peripheral stalk is formed by the delta and b chains.

Its subcellular location is the cell inner membrane. It catalyses the reaction ATP + H2O + 4 H(+)(in) = ADP + phosphate + 5 H(+)(out). Its function is as follows. Produces ATP from ADP in the presence of a proton gradient across the membrane. The catalytic sites are hosted primarily by the beta subunits. The sequence is that of ATP synthase subunit beta 1 from Marinomonas sp. (strain MWYL1).